We begin with the raw amino-acid sequence, 235 residues long: Elongation factor Tu (235 aa).

In terms of domain architecture, tr-type G spans 1-125; the sequence is KNMITGATQM…DGDKYIPTPS (125 aa). A GTP-binding site is contributed by 47–50; that stretch reads NKQD.

The protein belongs to the TRAFAC class translation factor GTPase superfamily. Classic translation factor GTPase family. EF-Tu/EF-1A subfamily. In terms of assembly, monomer.

It localises to the cytoplasm. The enzyme catalyses GTP + H2O = GDP + phosphate + H(+). In terms of biological role, GTP hydrolase that promotes the GTP-dependent binding of aminoacyl-tRNA to the A-site of ribosomes during protein biosynthesis. This chain is Elongation factor Tu (tufA), found in Leptolyngbya boryana (Plectonema boryanum).